We begin with the raw amino-acid sequence, 94 residues long: C-C motif chemokine 26 (94 aa).

An N-terminal signal peptide occupies residues 1-23 (MKSFPVAFLVLLIFILSVHRGVT). Cystine bridges form between Cys-33-Cys-57 and Cys-34-Cys-73.

Belongs to the intercrine beta (chemokine CC) family. As to quaternary structure, monomer.

Its subcellular location is the secreted. Chemoattractant for eosinophils and basophils. Acts as a ligand for C-C chemokine receptor CCR3 which triggers Ca(2+) mobilization in eosinophils. Also acts as a ligand for CX3C chemokine receptor CX3CR1, inducing cell chemotaxis. The polypeptide is C-C motif chemokine 26 (Canis lupus familiaris (Dog)).